The following is a 233-amino-acid chain: 7-cyano-7-deazaguanine synthase (233 aa).

Position 18–28 (18–28 (FSGGQDSTTCL)) interacts with ATP. Residues Cys-198, Cys-213, Cys-216, and Cys-219 each contribute to the Zn(2+) site.

The protein belongs to the QueC family. Requires Zn(2+) as cofactor.

It catalyses the reaction 7-carboxy-7-deazaguanine + NH4(+) + ATP = 7-cyano-7-deazaguanine + ADP + phosphate + H2O + H(+). The protein operates within purine metabolism; 7-cyano-7-deazaguanine biosynthesis. In terms of biological role, catalyzes the ATP-dependent conversion of 7-carboxy-7-deazaguanine (CDG) to 7-cyano-7-deazaguanine (preQ(0)). The protein is 7-cyano-7-deazaguanine synthase of Wolinella succinogenes (strain ATCC 29543 / DSM 1740 / CCUG 13145 / JCM 31913 / LMG 7466 / NCTC 11488 / FDC 602W) (Vibrio succinogenes).